A 225-amino-acid polypeptide reads, in one-letter code: Protein LiaH (225 aa).

Coiled coils occupy residues 58 to 151 and 161 to 182; these read KKYE…KEHM and ESAY…IRAN.

This sequence belongs to the PspA/Vipp/IM30 family.

This Bacillus subtilis (strain 168) protein is Protein LiaH (liaH).